A 361-amino-acid chain; its full sequence is Cytochrome P450 family protein EryCII (361 aa).

It belongs to the cytochrome P450 family. Heterotetramer composed of EryCII and EryCIII.

The protein operates within antibiotic biosynthesis; erythromycin biosynthesis. Its function is as follows. Involved in the erythromycin biosynthesis pathway. Acts by forming a complex and stabilizing the desosaminyl transferase EryCIII. In Saccharopolyspora erythraea (strain ATCC 11635 / DSM 40517 / JCM 4748 / NBRC 13426 / NCIMB 8594 / NRRL 2338), this protein is Cytochrome P450 family protein EryCII (eryCII).